A 316-amino-acid polypeptide reads, in one-letter code: Aspartate carbamoyltransferase catalytic subunit (316 aa).

Carbamoyl phosphate-binding residues include Arg59 and Thr60. An L-aspartate-binding site is contributed by Lys88. Carbamoyl phosphate-binding residues include Arg109, His137, and Gln140. L-aspartate-binding residues include Arg170 and Arg232. Carbamoyl phosphate is bound by residues Leu269 and Pro270.

This sequence belongs to the aspartate/ornithine carbamoyltransferase superfamily. ATCase family. In terms of assembly, heterooligomer of catalytic and regulatory chains.

It catalyses the reaction carbamoyl phosphate + L-aspartate = N-carbamoyl-L-aspartate + phosphate + H(+). Its pathway is pyrimidine metabolism; UMP biosynthesis via de novo pathway; (S)-dihydroorotate from bicarbonate: step 2/3. In terms of biological role, catalyzes the condensation of carbamoyl phosphate and aspartate to form carbamoyl aspartate and inorganic phosphate, the committed step in the de novo pyrimidine nucleotide biosynthesis pathway. The chain is Aspartate carbamoyltransferase catalytic subunit from Methanobrevibacter smithii (strain ATCC 35061 / DSM 861 / OCM 144 / PS).